The following is a 208-amino-acid chain: Small ribosomal subunit protein uS4 (208 aa).

Residues 98–163 (TRLDNVVFRL…TPLFKEIVDG (66 aa)) enclose the S4 RNA-binding domain.

Belongs to the universal ribosomal protein uS4 family. In terms of assembly, part of the 30S ribosomal subunit. Contacts protein S5. The interaction surface between S4 and S5 is involved in control of translational fidelity.

Its function is as follows. One of the primary rRNA binding proteins, it binds directly to 16S rRNA where it nucleates assembly of the body of the 30S subunit. Functionally, with S5 and S12 plays an important role in translational accuracy. This Heliobacterium modesticaldum (strain ATCC 51547 / Ice1) protein is Small ribosomal subunit protein uS4.